A 191-amino-acid polypeptide reads, in one-letter code: Protein Ves (191 aa).

It belongs to the Ves family.

The protein is Protein Ves of Shigella flexneri serotype 5b (strain 8401).